A 973-amino-acid polypeptide reads, in one-letter code: Mediator of RNA polymerase II transcription subunit 16 (973 aa).

It belongs to the Mediator complex subunit 16 family. Component of the Mediator complex.

It localises to the nucleus. Functionally, component of the Mediator complex, a coactivator involved in the regulated transcription of nearly all RNA polymerase II-dependent genes. Mediator functions as a bridge to convey information from gene-specific regulatory proteins to the basal RNA polymerase II transcription machinery. Mediator is recruited to promoters by direct interactions with regulatory proteins and serves as a scaffold for the assembly of a functional preinitiation complex with RNA polymerase II and the general transcription factors. The polypeptide is Mediator of RNA polymerase II transcription subunit 16 (SIN4) (Candida glabrata (strain ATCC 2001 / BCRC 20586 / JCM 3761 / NBRC 0622 / NRRL Y-65 / CBS 138) (Yeast)).